The primary structure comprises 3546 residues: Ubiquitin carboxyl-terminal hydrolase 34 (3546 aa).

Serine 352, serine 486, serine 487, and serine 490 each carry phosphoserine. Disordered stretches follow at residues 502–535, 550–679, and 1459–1478; these read KEEE…SGGS, VQQR…VFNT, and TGSY…DQVE. The span at 511 to 524 shows a compositional bias: low complexity; sequence APSPWSPAASPQSS. Polar residues-rich tracts occupy residues 525 to 534 and 560 to 570; these read DNSDTHQSGG and SMQGSSDETAN. The segment covering 571 to 590 has biased composition (low complexity); that stretch reads SGEDGSSGPGSSSGHSDGSS. Residues 591–609 are compositionally biased toward polar residues; sequence NEVNSSHASQSAGSPGSEV. A compositionally biased stretch (acidic residues) spans 610-627; the sequence is QSEDIADIEALKEEDEDD. Residue serine 649 is modified to Phosphoserine. Polar residues predominate over residues 659–671; that stretch reads QGMSERNGTSSGT. A compositionally biased stretch (acidic residues) spans 1467–1477; it reads PDSDDSSEDQV. The residue at position 1469 (serine 1469) is a Phosphoserine. Residues 1894–2239 form the USP domain; that stretch reads VGLTNLGATC…SAYMLFYKRM (346 aa). The active-site Nucleophile is the cysteine 1903. The Proton acceptor role is filled by histidine 2164. A Phosphoserine modification is found at serine 2488. The disordered stretch occupies residues 3331-3443; it reads NSLQEQEAKE…HAEEQSNNGR (113 aa). Residues 3336 to 3347 show a composition bias toward basic and acidic residues; sequence QEAKERKTKDDE. Residues serine 3358 and serine 3359 each carry the phosphoserine modification. Threonine 3381 is subject to Phosphothreonine. Phosphoserine occurs at positions 3386 and 3406. A compositionally biased stretch (polar residues) spans 3421–3432; the sequence is SSFSEDMSNIRS. Over residues 3433–3443 the composition is skewed to basic and acidic residues; the sequence is QHAEEQSNNGR. At serine 3503 the chain carries Phosphoserine.

Belongs to the peptidase C19 family. In terms of assembly, interacts with AXIN1 and AXIN2. As to expression, expressed in brain at low level.

The catalysed reaction is Thiol-dependent hydrolysis of ester, thioester, amide, peptide and isopeptide bonds formed by the C-terminal Gly of ubiquitin (a 76-residue protein attached to proteins as an intracellular targeting signal).. Its function is as follows. Ubiquitin hydrolase that can remove conjugated ubiquitin from AXIN1 and AXIN2, thereby acting as a regulator of Wnt signaling pathway. Acts as an activator of the Wnt signaling pathway downstream of the beta-catenin destruction complex by deubiquitinating and stabilizing AXIN1 and AXIN2, leading to promote nuclear accumulation of AXIN1 and AXIN2 and positively regulate beta-catenin (CTNBB1)-mediated transcription. Recognizes and hydrolyzes the peptide bond at the C-terminal Gly of ubiquitin. Involved in the processing of poly-ubiquitin precursors as well as that of ubiquitinated proteins. This chain is Ubiquitin carboxyl-terminal hydrolase 34 (USP34), found in Homo sapiens (Human).